A 400-amino-acid polypeptide reads, in one-letter code: S-adenosylmethionine sensor upstream of mTORC1 (400 aa).

S-adenosyl-L-methionine-binding residues include arginine 99, glycine 168, aspartate 186, aspartate 198, phenylalanine 199, and serine 240.

This sequence belongs to the BMT2/SAMTOR family. As to quaternary structure, interacts with the GATOR1 complex; interaction is disrupted when samtor binds S-adenosyl-L-methionine. Interacts with the KICSTOR complex; interaction is disrupted when samtor binds S-adenosyl-L-methionine.

Its function is as follows. S-adenosyl-L-methionine-binding protein that acts as an inhibitor of mTORC1 signaling via interaction with the GATOR1 and KICSTOR complexes. Acts as a sensor of S-adenosyl-L-methionine to signal methionine sufficiency to mTORC1: in presence of methionine, binds S-adenosyl-L-methionine, leading to disrupt interaction with the GATOR1 and KICSTOR complexes and promote mTORC1 signaling. Upon methionine starvation, S-adenosyl-L-methionine levels are reduced, thereby promoting the association with GATOR1 and KICSTOR, leading to inhibit mTORC1 signaling. Probably also acts as a S-adenosyl-L-methionine-dependent methyltransferase. This Xenopus tropicalis (Western clawed frog) protein is S-adenosylmethionine sensor upstream of mTORC1.